A 349-amino-acid chain; its full sequence is Protein arginine N-methyltransferase 6 (349 aa).

The SAM-dependent MTase PRMT-type domain maps to 17 to 324 (DYMYFDSYSD…EENSRHICIR (308 aa)). Residues H30, R39, G63, E85, and E114 each coordinate S-adenosyl-L-methionine. Residues E128 and E137 contribute to the active site.

Belongs to the class I-like SAM-binding methyltransferase superfamily. Protein arginine N-methyltransferase family. PRMT6 subfamily.

Its subcellular location is the nucleus. The enzyme catalyses L-arginyl-[protein] + 2 S-adenosyl-L-methionine = N(omega),N(omega)-dimethyl-L-arginyl-[protein] + 2 S-adenosyl-L-homocysteine + 2 H(+). Its function is as follows. Arginine methyltransferase that can catalyze the formation of both omega-N monomethylarginine (MMA) and asymmetrical dimethylarginine (aDMA), with a strong preference for the formation of aDMA. Preferentially methylates arginyl residues present in a glycine and arginine-rich domain and displays preference for monomethylated substrates. Specifically mediates the asymmetric dimethylation of histone H3 'Arg-2' to form H3R2me2a. H3R2me2a represents a specific tag for epigenetic transcriptional repression and is mutually exclusive with methylation on histone H3 'Lys-4' (H3K4me2 and H3K4me3). Acts as a transcriptional repressor of various genes such as HOXA2, THBS1 and TP53. Repression of TP53 blocks cellular senescence. Also methylates histone H2A and H4 'Arg-3' (H2AR3me and H4R3me, respectively). Acts as a regulator of DNA base excision during DNA repair by mediating the methylation of DNA polymerase beta (POLB), leading to the stimulation of its polymerase activity by enhancing DNA binding and processivity. Methylates HMGA1. Regulates alternative splicing events. Acts as a transcriptional coactivator of a number of steroid hormone receptors including ESR1, ESR2, PGR and NR3C1. The sequence is that of Protein arginine N-methyltransferase 6 (prmt6) from Danio rerio (Zebrafish).